Reading from the N-terminus, the 88-residue chain is Cell division topological specificity factor (88 aa).

It belongs to the MinE family.

Functionally, prevents the cell division inhibition by proteins MinC and MinD at internal division sites while permitting inhibition at polar sites. This ensures cell division at the proper site by restricting the formation of a division septum at the midpoint of the long axis of the cell. This chain is Cell division topological specificity factor, found in Clostridium botulinum (strain Alaska E43 / Type E3).